The sequence spans 337 residues: 5-formaminoimidazole-4-carboxamide-1-(beta)-D-ribofuranosyl 5'-monophosphate synthetase (337 aa).

5-amino-1-(5-phospho-beta-D-ribosyl)imidazole-4-carboxamide-binding residues include histidine 23 and serine 87. The region spanning methionine 121 to lysine 328 is the ATP-grasp domain. Residues proline 144–tyrosine 191 and glutamate 213 contribute to the ATP site. Asparagine 233 provides a ligand contact to 5-amino-1-(5-phospho-beta-D-ribosyl)imidazole-4-carboxamide. 2 residues coordinate Mg(2+): glutamate 272 and glutamate 285.

It belongs to the phosphohexose mutase family. Mg(2+) is required as a cofactor. Requires Mn(2+) as cofactor.

It carries out the reaction 5-amino-1-(5-phospho-beta-D-ribosyl)imidazole-4-carboxamide + formate + ATP = 5-formamido-1-(5-phospho-D-ribosyl)imidazole-4-carboxamide + ADP + phosphate. Its pathway is purine metabolism; IMP biosynthesis via de novo pathway; 5-formamido-1-(5-phospho-D-ribosyl)imidazole-4-carboxamide from 5-amino-1-(5-phospho-D-ribosyl)imidazole-4-carboxamide (formate route): step 1/1. Catalyzes the ATP- and formate-dependent formylation of 5-aminoimidazole-4-carboxamide-1-beta-d-ribofuranosyl 5'-monophosphate (AICAR) to 5-formaminoimidazole-4-carboxamide-1-beta-d-ribofuranosyl 5'-monophosphate (FAICAR) in the absence of folates. This chain is 5-formaminoimidazole-4-carboxamide-1-(beta)-D-ribofuranosyl 5'-monophosphate synthetase, found in Caldivirga maquilingensis (strain ATCC 700844 / DSM 13496 / JCM 10307 / IC-167).